The following is a 176-amino-acid chain: HTH-type transcriptional regulator DctR (176 aa).

Positions 109–174 (VPEADVSLSR…ELVRHQHINY (66 aa)) constitute an HTH luxR-type domain. Residues 133 to 152 (TEDILEKLKISLKTFYCHKH) constitute a DNA-binding region (H-T-H motif).

In terms of biological role, may act as a transcriptional regulator of dctA. This chain is HTH-type transcriptional regulator DctR (dctR), found in Escherichia coli O6:H1 (strain CFT073 / ATCC 700928 / UPEC).